Here is a 365-residue protein sequence, read N- to C-terminus: Protein RecA (365 aa).

An ATP-binding site is contributed by 81-88 (GPESSGKT).

This sequence belongs to the RecA family.

It localises to the cytoplasm. Its function is as follows. Can catalyze the hydrolysis of ATP in the presence of single-stranded DNA, the ATP-dependent uptake of single-stranded DNA by duplex DNA, and the ATP-dependent hybridization of homologous single-stranded DNAs. It interacts with LexA causing its activation and leading to its autocatalytic cleavage. This chain is Protein RecA, found in Borreliella afzelii (strain PKo) (Borrelia afzelii).